Here is a 743-residue protein sequence, read N- to C-terminus: Catalase-peroxidase (743 aa).

Over residues 1–15 the composition is skewed to polar residues; sequence MSSDSRPPQPDTSTQ. A disordered region spans residues 1–40; sequence MSSDSRPPQPDTSTQSNSESESPAISSPTPQDHAPMTNRD. Residues 16–28 are compositionally biased toward low complexity; that stretch reads SNSESESPAISSP. Residues 110-233 constitute a cross-link (tryptophyl-tyrosyl-methioninium (Trp-Tyr) (with M-259)); sequence WHAAGTYRIQ…YGATTMGLIY (124 aa). His111 (proton acceptor) is an active-site residue. The segment at residues 233–259 is a cross-link (tryptophyl-tyrosyl-methioninium (Tyr-Met) (with W-110)); the sequence is YVNPEGPEGKPDPVAAAHDIRETFARM. His274 is a heme b binding site. Residues 490-511 form a disordered region; sequence DKRGGANGGRLRLEPQKSWESN.

The protein belongs to the peroxidase family. Peroxidase/catalase subfamily. In terms of assembly, homodimer or homotetramer. The cofactor is heme b. Formation of the three residue Trp-Tyr-Met cross-link is important for the catalase, but not the peroxidase activity of the enzyme.

It catalyses the reaction H2O2 + AH2 = A + 2 H2O. The catalysed reaction is 2 H2O2 = O2 + 2 H2O. In terms of biological role, bifunctional enzyme with both catalase and broad-spectrum peroxidase activity. The polypeptide is Catalase-peroxidase (Mycobacterium ulcerans (strain Agy99)).